A 215-amino-acid polypeptide reads, in one-letter code: Cytochrome b6 (215 aa).

Residues 32 to 52 (IFYCLGGITLTCFLVQVATGF) form a helical membrane-spanning segment. A heme c-binding site is contributed by Cys35. Heme b-binding residues include His86 and His100. 3 consecutive transmembrane segments (helical) span residues 90-110 (ASMM…TGGF), 116-136 (LTWV…VTGY), and 186-206 (LHTF…FPMI). The heme b site is built by His187 and His202.

Belongs to the cytochrome b family. PetB subfamily. In terms of assembly, the 4 large subunits of the cytochrome b6-f complex are cytochrome b6, subunit IV (17 kDa polypeptide, PetD), cytochrome f and the Rieske protein, while the 4 small subunits are PetG, PetL, PetM and PetN. The complex functions as a dimer. It depends on heme b as a cofactor. The cofactor is heme c.

It localises to the plastid. Its subcellular location is the chloroplast thylakoid membrane. Component of the cytochrome b6-f complex, which mediates electron transfer between photosystem II (PSII) and photosystem I (PSI), cyclic electron flow around PSI, and state transitions. The sequence is that of Cytochrome b6 from Populus alba (White poplar).